Here is a 256-residue protein sequence, read N- to C-terminus: Imidazole glycerol phosphate synthase subunit HisF (256 aa).

Catalysis depends on residues aspartate 12 and aspartate 131.

It belongs to the HisA/HisF family. Heterodimer of HisH and HisF.

It localises to the cytoplasm. It catalyses the reaction 5-[(5-phospho-1-deoxy-D-ribulos-1-ylimino)methylamino]-1-(5-phospho-beta-D-ribosyl)imidazole-4-carboxamide + L-glutamine = D-erythro-1-(imidazol-4-yl)glycerol 3-phosphate + 5-amino-1-(5-phospho-beta-D-ribosyl)imidazole-4-carboxamide + L-glutamate + H(+). It functions in the pathway amino-acid biosynthesis; L-histidine biosynthesis; L-histidine from 5-phospho-alpha-D-ribose 1-diphosphate: step 5/9. Its function is as follows. IGPS catalyzes the conversion of PRFAR and glutamine to IGP, AICAR and glutamate. The HisF subunit catalyzes the cyclization activity that produces IGP and AICAR from PRFAR using the ammonia provided by the HisH subunit. This chain is Imidazole glycerol phosphate synthase subunit HisF, found in Pseudomonas putida (strain GB-1).